Consider the following 107-residue polypeptide: Transmembrane protein 213 (107 aa).

An N-terminal signal peptide occupies residues 1 to 27 (MQRLPAATRATLILSLAFASLHSACSA). Over 28-70 (EASSSNSSSLTAHHPDPGTLEQCLNVDFCPQAARCCRTGVDEY) the chain is Extracellular. Residues 71 to 91 (GWIAAAVGWSLWFLTLILLCV) traverse the membrane as a helical segment. Over 92–107 (DKLMKLTPDEPKDLQA) the chain is Cytoplasmic.

Its subcellular location is the membrane. The chain is Transmembrane protein 213 (TMEM213) from Homo sapiens (Human).